An 880-amino-acid polypeptide reads, in one-letter code: DNA-directed RNA polymerase subunit Rpo1N (880 aa).

Zn(2+)-binding residues include Cys58, Cys61, Cys68, and His71. DsDNA-binding positions include Lys88 and 92–95 (EFLK). Residues Cys98 and Cys101 each coordinate Zn(2+). Lys138 provides a ligand contact to dsDNA. Cys146 and Cys149 together coordinate Zn(2+). DsDNA contacts are provided by residues Lys303, 305–310 (KEGRFR), Arg323, and Gln422. Mg(2+) contacts are provided by Asp456, Asp458, and Asp460. Arg573, Cys575, Cys580, and His582 together coordinate Zn(2+). Residues 812-822 (RTSQSGYMQRR) and Gln815 contribute to the dsDNA site.

It belongs to the RNA polymerase beta' chain family. Part of the 13-subunit RNA polymerase complex. Rpo1N and Rpo5 form a cleft which docks Rpo13. Interacts with Rpo8 on the periphery of the clamp head. Mg(2+) is required as a cofactor. Requires Zn(2+) as cofactor.

It is found in the cytoplasm. It carries out the reaction RNA(n) + a ribonucleoside 5'-triphosphate = RNA(n+1) + diphosphate. DNA-dependent RNA polymerase (RNAP) catalyzes the transcription of DNA into RNA using the four ribonucleoside triphosphates as substrates. Forms the clamp head domain. This Saccharolobus shibatae (strain ATCC 51178 / DSM 5389 / JCM 8931 / NBRC 15437 / B12) (Sulfolobus shibatae) protein is DNA-directed RNA polymerase subunit Rpo1N.